The chain runs to 350 residues: Protein pelota homolog (350 aa).

It belongs to the eukaryotic release factor 1 family. Pelota subfamily. Monomer. A divalent metal cation is required as a cofactor.

The protein localises to the cytoplasm. May function in recognizing stalled ribosomes, interact with stem-loop structures in stalled mRNA molecules, and effect endonucleolytic cleavage of the mRNA. May play a role in the release non-functional ribosomes and degradation of damaged mRNAs. Has endoribonuclease activity. The protein is Protein pelota homolog of Methanosarcina mazei (strain ATCC BAA-159 / DSM 3647 / Goe1 / Go1 / JCM 11833 / OCM 88) (Methanosarcina frisia).